A 256-amino-acid chain; its full sequence is Small ribosomal subunit protein eS1 (256 aa).

At Ala-2 the chain carries N-acetylalanine; partial.

Belongs to the eukaryotic ribosomal protein eS1 family. As to quaternary structure, component of the small ribosomal subunit. Mature ribosomes consist of a small (40S) and a large (60S) subunit. The 40S subunit contains about 33 different proteins and 1 molecule of RNA (18S). The 60S subunit contains about 49 different proteins and 3 molecules of RNA (25S, 5.8S and 5S).

Its subcellular location is the cytoplasm. The sequence is that of Small ribosomal subunit protein eS1 from Candida tropicalis (strain ATCC MYA-3404 / T1) (Yeast).